A 408-amino-acid chain; its full sequence is MAAPCHRGVSAGDDAVGTGTSFKRKVRGKFPALPGTRPSVHNGQLLVSTGVPSLDHILGGGLAVGTLLLIEEDTYGTYSHLLLKYFLAEGVVSGHEVFVASANDDPTETLQDLPSPLTDEVPRQNDPKRTKDTSGPADDSQEMMKIAWRYQNLPKVETLPISSSRFGHYYDLSKTMPPEMSAKSHRFYLPRIMSANQKQNVSEVTCNYNQLLESIQRVVHQEGYDGSNPQKRPKTILRLGIESLGSVLWADDICSQERPENQHSLTRFLYGLRGLLRTSLSVCVITVPTYLIQNKAITTRLRSLSDTVVGLESFIGSEMEANPLYKDYHGLLHVHQIPRLNSLISDGSDTKDLAFKLKRKIFAIERLHLPPDLSDTVSRSSKQDLAGSAKLLSSGCGPAAGGEKHLDF.

The interval 106–141 is disordered; that stretch reads PTETLQDLPSPLTDEVPRQNDPKRTKDTSGPADDSQ. Residues 120–132 show a composition bias toward basic and acidic residues; that stretch reads EVPRQNDPKRTKD.

This sequence belongs to the ELP4 family. In terms of assembly, component of the elongator complex.

The protein localises to the cytoplasm. It is found in the nucleus. The protein operates within tRNA modification; 5-methoxycarbonylmethyl-2-thiouridine-tRNA biosynthesis. In terms of biological role, component of the elongator complex which is required for multiple tRNA modifications, including mcm5U (5-methoxycarbonylmethyl uridine), mcm5s2U (5-methoxycarbonylmethyl-2-thiouridine), and ncm5U (5-carbamoylmethyl uridine). The elongator complex catalyzes the formation of carboxymethyluridine in the wobble base at position 34 in tRNAs. The chain is Elongator complex protein 4 (elp4) from Xenopus laevis (African clawed frog).